We begin with the raw amino-acid sequence, 358 residues long: Magnesium-protoporphyrin IX monomethyl ester [oxidative] cyclase (358 aa).

This sequence belongs to the AcsF family. The cofactor is Fe cation.

The enzyme catalyses Mg-protoporphyrin IX 13-monomethyl ester + 3 NADPH + 3 O2 + 2 H(+) = 3,8-divinyl protochlorophyllide a + 3 NADP(+) + 5 H2O. Its pathway is porphyrin-containing compound metabolism; chlorophyll biosynthesis (light-independent). Its function is as follows. Catalyzes the formation of the isocyclic ring in chlorophyll biosynthesis. Mediates the cyclase reaction, which results in the formation of divinylprotochlorophyllide (Pchlide) characteristic of all chlorophylls from magnesium-protoporphyrin IX 13-monomethyl ester (MgPMME). This Trichodesmium erythraeum (strain IMS101) protein is Magnesium-protoporphyrin IX monomethyl ester [oxidative] cyclase.